The chain runs to 147 residues: Large ribosomal subunit protein bL9 (147 aa).

The protein belongs to the bacterial ribosomal protein bL9 family.

Functionally, binds to the 23S rRNA. In Bacteroides fragilis (strain ATCC 25285 / DSM 2151 / CCUG 4856 / JCM 11019 / LMG 10263 / NCTC 9343 / Onslow / VPI 2553 / EN-2), this protein is Large ribosomal subunit protein bL9.